The following is a 535-amino-acid chain: Peptide chain release factor 3 (535 aa).

Residues 8–277 (KRRRTFAIIS…TLVDLAPPPG (270 aa)) form the tr-type G domain. GTP-binding positions include 17-24 (SHPDAGKT), 85-89 (DTPGH), and 139-142 (NKLD).

The protein belongs to the TRAFAC class translation factor GTPase superfamily. Classic translation factor GTPase family. PrfC subfamily.

It is found in the cytoplasm. Functionally, increases the formation of ribosomal termination complexes and stimulates activities of RF-1 and RF-2. It binds guanine nucleotides and has strong preference for UGA stop codons. It may interact directly with the ribosome. The stimulation of RF-1 and RF-2 is significantly reduced by GTP and GDP, but not by GMP. The polypeptide is Peptide chain release factor 3 (Nitrosomonas eutropha (strain DSM 101675 / C91 / Nm57)).